We begin with the raw amino-acid sequence, 349 residues long: 5-deoxyribose 1-phosphate isomerase (349 aa).

Substrate-binding positions include 49 to 51 (RGA), R92, and Q199. Catalysis depends on D240, which acts as the Proton donor. Position 250–251 (250–251 (NK)) interacts with substrate.

Belongs to the EIF-2B alpha/beta/delta subunits family. DrdI subfamily.

It catalyses the reaction 5-deoxy-alpha-D-ribose 1-phosphate = 5-deoxy-D-ribulose 1-phosphate. Its pathway is carbohydrate degradation. In terms of biological role, catalyzes the isomerization of 5-deoxy-alpha-D-ribose 1-phosphate to 5-deoxy-D-ribulose 1-phosphate, as part of a 5-deoxyribose salvage pathway that recycles this toxic radical SAM enzyme by-product to mainstream metabolites. The polypeptide is 5-deoxyribose 1-phosphate isomerase (Clostridium botulinum (strain Kyoto / Type A2)).